We begin with the raw amino-acid sequence, 2223 residues long: Voltage-dependent T-type calcium channel subunit alpha-1I (2223 aa).

The span at 1-19 (MAESASPPSSSAAAPAAEP) shows a compositional bias: low complexity. The disordered stretch occupies residues 1–46 (MAESASPPSSSAAAPAAEPGVTTEQPGPRSPPSSPPGLEEPLDGAD). The Cytoplasmic portion of the chain corresponds to 1 to 78 (MAESASPPSS…RNWCIKMVCN (78 aa)). Residues 66-401 (TSPRNWCIKM…LCLVVIATQF (336 aa)) form an I repeat. A helical transmembrane segment spans residues 79-99 (PWFECVSMLVILLNCVTLGMY). The Extracellular segment spans residues 100-120 (QPCDDMDCLSDRCKILQVFDD). The helical transmembrane segment at 121 to 141 (FIFIFFAMEMVLKMVALGIFG) threads the bilayer. Residues 142–148 (KKCYLGD) are Cytoplasmic-facing. A helical membrane pass occupies residues 149 to 168 (TWNRLDFFIVMAGMVEYSLD). Over 169–173 (LQNIN) the chain is Extracellular. N-linked (GlcNAc...) asparagine glycosylation occurs at Asn-173. The helical transmembrane segment at 174-191 (LSAIRTVRVLRPLKAINR) threads the bilayer. Residues 192-211 (VPSMRILVNLLLDTLPMLGN) lie on the Cytoplasmic side of the membrane. Residues 212–232 (VLLLCFFVFFIFGIIGVQLWA) form a helical membrane-spanning segment. Residues 233–377 (GLLRNRCFLE…DAHSFYNFIY (145 aa)) lie on the Extracellular side of the membrane. N-linked (GlcNAc...) asparagine glycans are attached at residues Asn-244 and Asn-311. The chain crosses the membrane as a helical span at residues 378-398 (FILLIIVGSFFMINLCLVVIA). The Cytoplasmic portion of the chain corresponds to 399-640 (TQFSETKQRE…AKLRGIVDSK (242 aa)). 2 disordered regions span residues 467–536 (LGPE…ATPH) and 555–616 (CCQH…EQAD). The stretch at 626–865 (WRETRAKLRG…LLVAILVEGF (240 aa)) is one II repeat. The helical transmembrane segment at 641-661 (YFNRGIMMAILVNTVSMGIEH) threads the bilayer. The Extracellular segment spans residues 662–676 (HEQPEELTNILEICN). A helical membrane pass occupies residues 677–697 (VVFTSMFALEMILKLAAFGLF). Over 698-702 (DYLRN) the chain is Cytoplasmic. Residues 703 to 721 (PYNIFDSIIVIISIWEIVG) traverse the membrane as a helical segment. The Extracellular portion of the chain corresponds to 722 to 729 (QADGGLSV). The helical transmembrane segment at 730-753 (LRTFRLLRVLKLVRFMPALRRQLV) threads the bilayer. The Cytoplasmic segment spans residues 754-764 (VLMKTMDNVAT). Residues 765-785 (FCMLLMLFIFIFSILGMHIFG) form a helical membrane-spanning segment. The Extracellular segment spans residues 786 to 841 (CKFSLRTDTGDTVPDRKNFDSLLWAIVTVFQILTQEDWNVVLYNGMASTSPWASLY). A helical transmembrane segment spans residues 842-862 (FVALMTFGNYVLFNLLVAILV). Residues 863–1166 (EGFQAEGDAN…NRFRVLCQTI (304 aa)) lie on the Cytoplasmic side of the membrane. The tract at residues 899-936 (GDPKLCPIPMTPNGHLDPSLPLGGHLGPAGAAGPAPRL) is disordered. Positions 912 to 936 (GHLDPSLPLGGHLGPAGAAGPAPRL) are enriched in low complexity. The residue at position 1058 (Ser-1058) is a Phosphoserine. The stretch at 1157–1434 (NRFRVLCQTI…MFVGVVVENF (278 aa)) is one III repeat. A helical transmembrane segment spans residues 1167 to 1187 (IAHKLFDYVVLAFIFLNCITI). The Extracellular portion of the chain corresponds to 1188 to 1209 (ALERPQIEAGSTERIFLTVSNY). A helical membrane pass occupies residues 1210-1230 (IFTAIFVGEMTLKVVSLGLYF). Over 1231-1244 (GEQAYLRSSWNVLD) the chain is Cytoplasmic. Residues 1245–1265 (GFLVFVSIIDIVVSLASAGGA) form a helical membrane-spanning segment. At 1266-1272 (KILGVLR) the chain is on the extracellular side. A helical transmembrane segment spans residues 1273–1294 (VLRLLRTLRPLRVISRAPGLKL). Over 1295-1304 (VVETLISSLK) the chain is Cytoplasmic. The chain crosses the membrane as a helical span at residues 1305-1325 (PIGNIVLICCAFFIIFGILGV). Over 1326-1410 (QLFKGKFYHC…TNHNPWMLLY (85 aa)) the chain is Extracellular. Residues Asn-1342 and Asn-1345 are each glycosylated (N-linked (GlcNAc...) asparagine). A helical membrane pass occupies residues 1411–1431 (FISFLLIVSFFVLNMFVGVVV). At 1432–1485 (ENFHKCRQHQEAEEARRREEKRLRRLEKKRRKAQRLPYYATYCHTRLLIHSMCT) the chain is on the cytoplasmic side. Residues 1472 to 1733 (TYCHTRLLIH…VVVAVLMKHL (262 aa)) form an IV repeat. A helical membrane pass occupies residues 1486 to 1506 (SHYLDIFITFIICLNVVTMSL). Over 1507–1522 (EHYNQPTSLETALKYC) the chain is Extracellular. Residues 1523-1543 (NYMFTTVFVLEAVLKLVAFGL) traverse the membrane as a helical segment. Over 1544 to 1556 (RRFFKDRWNQLDL) the chain is Cytoplasmic. Residues 1557 to 1577 (AIVLLSVMGITLEEIEINAAL) traverse the membrane as a helical segment. Residues 1578 to 1583 (PINPTI) are Extracellular-facing. The helical transmembrane segment at 1584 to 1607 (IRIMRVLRIARVLKLLKMATGMRA) threads the bilayer. The Cytoplasmic portion of the chain corresponds to 1608–1621 (LLDTVVQALPQVGN). Residues 1622-1642 (LGLLFMLLFFIYAALGVELFG) form a helical membrane-spanning segment. The Extracellular portion of the chain corresponds to 1643–1709 (KLVCNDENPC…SSLQFVSPLY (67 aa)). A helical transmembrane segment spans residues 1710–1730 (FVSFVLTAQFVLINVVVAVLM). Residues 1731–2223 (KHLDDSNKEA…PGDAASKRKR (493 aa)) are Cytoplasmic-facing. Disordered regions lie at residues 1758–1784 (LGPGPRLPTGSPGAPGRGPGGAGGGGD), 1868–1897 (LGDDLSLEDPTACPPGRKDSKGELDPPEPM), 1937–1960 (LKHDSSQAPPSPFSPDASSPLLPM), 2013–2062 (SDTS…LSPA), and 2076–2223 (SLRG…KRKR). A compositionally biased stretch (gly residues) spans 1770 to 1784 (GAPGRGPGGAGGGGD). A compositionally biased stretch (low complexity) spans 2013–2028 (SDTSLDASPSSSAGSL). Polar residues-rich tracts occupy residues 2029-2040 (QTTLEDSLTLSD) and 2087-2096 (HSSGGSTSPG). The span at 2098–2111 (THHDSMDPSDEEGR) shows a compositional bias: basic and acidic residues. Residues 2126-2136 (TLSSLSLTSLF) show a composition bias toward low complexity. Residues 2137-2146 (CPPPPPPAPG) show a composition bias toward pro residues. A compositionally biased stretch (low complexity) spans 2160–2176 (AAPGRPHAAALAHGLAR).

The protein belongs to the calcium channel alpha-1 subunit (TC 1.A.1.11) family. CACNA1I subfamily. Interacts with CATSPER1 and CATSPER2, leading to suppress T-type calcium channel activity. In response to raising of intracellular calcium, the T-type channels are activated by CaM-kinase II. In terms of tissue distribution, brain specific.

Its subcellular location is the membrane. It catalyses the reaction Ca(2+)(in) = Ca(2+)(out). Functionally, voltage-sensitive calcium channels (VSCC) mediate the entry of calcium ions into excitable cells and are also involved in a variety of calcium-dependent processes, including muscle contraction, hormone or neurotransmitter release, gene expression, cell motility, cell division and cell death. This channel gives rise to T-type calcium currents. T-type calcium channels belong to the 'low-voltage activated (LVA)' group and are strongly blocked by nickel and mibefradil. A particularity of this type of channels is an opening at quite negative potentials, and a voltage-dependent inactivation. T-type channels serve pacemaking functions in both central neurons and cardiac nodal cells and support calcium signaling in secretory cells and vascular smooth muscle. They may also be involved in the modulation of firing patterns of neurons which is important for information processing as well as in cell growth processes. Gates in voltage ranges similar to, but higher than alpha 1G or alpha 1H. Voltage-sensitive calcium channels (VSCC) mediate the entry of calcium ions into excitable cells and are also involved in a variety of calcium-dependent processes, including muscle contraction, hormone or neurotransmitter release, gene expression, cell motility, cell division and cell death. This channel gives rise to T-type calcium currents. In Homo sapiens (Human), this protein is Voltage-dependent T-type calcium channel subunit alpha-1I (CACNA1I).